Here is a 252-residue protein sequence, read N- to C-terminus: Imidazole glycerol phosphate synthase subunit HisF (252 aa).

Residues D11 and D130 contribute to the active site.

Belongs to the HisA/HisF family. In terms of assembly, heterodimer of HisH and HisF.

The protein resides in the cytoplasm. The enzyme catalyses 5-[(5-phospho-1-deoxy-D-ribulos-1-ylimino)methylamino]-1-(5-phospho-beta-D-ribosyl)imidazole-4-carboxamide + L-glutamine = D-erythro-1-(imidazol-4-yl)glycerol 3-phosphate + 5-amino-1-(5-phospho-beta-D-ribosyl)imidazole-4-carboxamide + L-glutamate + H(+). It participates in amino-acid biosynthesis; L-histidine biosynthesis; L-histidine from 5-phospho-alpha-D-ribose 1-diphosphate: step 5/9. In terms of biological role, IGPS catalyzes the conversion of PRFAR and glutamine to IGP, AICAR and glutamate. The HisF subunit catalyzes the cyclization activity that produces IGP and AICAR from PRFAR using the ammonia provided by the HisH subunit. In Sulfurihydrogenibium sp. (strain YO3AOP1), this protein is Imidazole glycerol phosphate synthase subunit HisF.